The chain runs to 101 residues: NAD(P)H-quinone oxidoreductase subunit 4L, chloroplastic (101 aa).

Transmembrane regions (helical) follow at residues 2 to 22 (MLEH…YGLI), 32 to 52 (MCLE…SDFF), and 61 to 81 (ILSI…LAIV).

The protein belongs to the complex I subunit 4L family. As to quaternary structure, NDH is composed of at least 16 different subunits, 5 of which are encoded in the nucleus.

It localises to the plastid. It is found in the chloroplast thylakoid membrane. It catalyses the reaction a plastoquinone + NADH + (n+1) H(+)(in) = a plastoquinol + NAD(+) + n H(+)(out). The catalysed reaction is a plastoquinone + NADPH + (n+1) H(+)(in) = a plastoquinol + NADP(+) + n H(+)(out). NDH shuttles electrons from NAD(P)H:plastoquinone, via FMN and iron-sulfur (Fe-S) centers, to quinones in the photosynthetic chain and possibly in a chloroplast respiratory chain. The immediate electron acceptor for the enzyme in this species is believed to be plastoquinone. Couples the redox reaction to proton translocation, and thus conserves the redox energy in a proton gradient. The protein is NAD(P)H-quinone oxidoreductase subunit 4L, chloroplastic of Buxus microphylla (Littleleaf boxwood).